The chain runs to 389 residues: Phospho-N-acetylmuramoyl-pentapeptide-transferase (389 aa).

10 helical membrane passes run 25–45 (RAVM…PWVI), 73–93 (TMGG…WADL), 97–117 (FIWI…VDDY), 135–155 (FWQT…VSEI), 190–210 (VSYP…IVGS), 222–242 (GLVI…AYVM), 258–278 (GAGE…AFLW), 286–306 (VFMG…IAVI), 311–331 (IVLF…MMQV), and 366–386 (QVVV…LSSL).

It belongs to the glycosyltransferase 4 family. MraY subfamily. Mg(2+) serves as cofactor.

It is found in the cell inner membrane. The enzyme catalyses UDP-N-acetyl-alpha-D-muramoyl-L-alanyl-gamma-D-glutamyl-meso-2,6-diaminopimeloyl-D-alanyl-D-alanine + di-trans,octa-cis-undecaprenyl phosphate = di-trans,octa-cis-undecaprenyl diphospho-N-acetyl-alpha-D-muramoyl-L-alanyl-D-glutamyl-meso-2,6-diaminopimeloyl-D-alanyl-D-alanine + UMP. It participates in cell wall biogenesis; peptidoglycan biosynthesis. In terms of biological role, catalyzes the initial step of the lipid cycle reactions in the biosynthesis of the cell wall peptidoglycan: transfers peptidoglycan precursor phospho-MurNAc-pentapeptide from UDP-MurNAc-pentapeptide onto the lipid carrier undecaprenyl phosphate, yielding undecaprenyl-pyrophosphoryl-MurNAc-pentapeptide, known as lipid I. The chain is Phospho-N-acetylmuramoyl-pentapeptide-transferase from Polynucleobacter asymbioticus (strain DSM 18221 / CIP 109841 / QLW-P1DMWA-1) (Polynucleobacter necessarius subsp. asymbioticus).